A 546-amino-acid chain; its full sequence is Sulfite oxidase, mitochondrial (546 aa).

A mitochondrion-targeting transit peptide spans 1-80 (MLPRLYRSVA…YHDHRCRASQ (80 aa)). In terms of domain architecture, Cytochrome b5 heme-binding spans 83-162 (PRIYSKEDVR…LAEYKIGELN (80 aa)). Residue His-119 participates in heme b binding. Ser-124 carries the post-translational modification Phosphoserine. Heme b is bound by residues His-144, Gln-146, and His-148. Residues 166–175 (RMSPPLEASD) are hinge. The segment at 176 to 402 (PYSNDPMRHP…YSHWQRRDYK (227 aa)) is moco domain. Residues 216-220 (FTRNH), Cys-265, Asp-323, His-362, Arg-367, and 378-380 (HVK) each bind Mo-molybdopterin. The interval 403–539 (GFSPSVDWDT…RGVLSNAWHR (137 aa)) is homodimerization.

In terms of assembly, homodimer. Requires heme b as cofactor. It depends on Mo-molybdopterin as a cofactor.

It localises to the mitochondrion intermembrane space. It carries out the reaction sulfite + O2 + H2O = sulfate + H2O2. It functions in the pathway energy metabolism; sulfur metabolism. In terms of biological role, catalyzes the oxidation of sulfite to sulfate, the terminal reaction in the oxidative degradation of sulfur-containing amino acids. The protein is Sulfite oxidase, mitochondrial of Rattus norvegicus (Rat).